We begin with the raw amino-acid sequence, 338 residues long: MNLQRFPRYPLTFGPTPIQPLKRLSAHLGGKVELYAKREDCNSGLAFGGNKTRKLEYLVPDALAQGADTLVSIGGVQSNQTRQVAAVAAHLGMKCVLVQEHWVNYEDPVYDRVGNIQLSRMMGADVRLVSDGFDIGIRRSWEEAMESVRQAGGKPYPIPAGCSEHPLGGLGFVGFAEEVRAQEAQLGFKFDYVVVCSVTGSTQAGMVVGFAADGRADRVIGIDASAKPEQTREQITRIARHTAELVELGRDIVEQDVVLDTRYGGPEYGLPSDGTLEAIRLCARLEGMLTDPVYEGKSMHGMIDKVRLGEFEPGSKVLYAHLGGAPALSAYNGIFRNG.

K51 is subject to N6-(pyridoxal phosphate)lysine. The active-site Nucleophile is the S78.

It belongs to the ACC deaminase/D-cysteine desulfhydrase family. As to quaternary structure, homotrimer. Pyridoxal 5'-phosphate is required as a cofactor.

It catalyses the reaction 1-aminocyclopropane-1-carboxylate + H2O = 2-oxobutanoate + NH4(+). Catalyzes a cyclopropane ring-opening reaction, the irreversible conversion of 1-aminocyclopropane-1-carboxylate (ACC) to ammonia and alpha-ketobutyrate. Allows growth on ACC as a nitrogen source. The polypeptide is 1-aminocyclopropane-1-carboxylate deaminase (Burkholderia orbicola (strain MC0-3)).